We begin with the raw amino-acid sequence, 183 residues long: Ribosome maturation factor RimM (183 aa).

A PRC barrel domain is found at 103-183 (EEGDYYWKDL…SIEVDWDPGF (81 aa)).

This sequence belongs to the RimM family. As to quaternary structure, binds ribosomal protein uS19.

It is found in the cytoplasm. Functionally, an accessory protein needed during the final step in the assembly of 30S ribosomal subunit, possibly for assembly of the head region. Essential for efficient processing of 16S rRNA. May be needed both before and after RbfA during the maturation of 16S rRNA. It has affinity for free ribosomal 30S subunits but not for 70S ribosomes. This chain is Ribosome maturation factor RimM, found in Escherichia coli O157:H7 (strain EC4115 / EHEC).